Consider the following 957-residue polypeptide: Bifunctional glutamine synthetase adenylyltransferase/adenylyl-removing enzyme (957 aa).

Residues Met1–Glu449 are adenylyl removase. Residues Ser457 to Glu957 are adenylyl transferase.

The protein belongs to the GlnE family. The cofactor is Mg(2+).

It carries out the reaction [glutamine synthetase]-O(4)-(5'-adenylyl)-L-tyrosine + phosphate = [glutamine synthetase]-L-tyrosine + ADP. The enzyme catalyses [glutamine synthetase]-L-tyrosine + ATP = [glutamine synthetase]-O(4)-(5'-adenylyl)-L-tyrosine + diphosphate. Functionally, involved in the regulation of glutamine synthetase GlnA, a key enzyme in the process to assimilate ammonia. When cellular nitrogen levels are high, the C-terminal adenylyl transferase (AT) inactivates GlnA by covalent transfer of an adenylyl group from ATP to specific tyrosine residue of GlnA, thus reducing its activity. Conversely, when nitrogen levels are low, the N-terminal adenylyl removase (AR) activates GlnA by removing the adenylyl group by phosphorolysis, increasing its activity. The regulatory region of GlnE binds the signal transduction protein PII (GlnB) which indicates the nitrogen status of the cell. This is Bifunctional glutamine synthetase adenylyltransferase/adenylyl-removing enzyme from Photobacterium profundum (strain SS9).